The sequence spans 116 residues: Methionine-R-sulfoxide reductase B1 (116 aa).

The MsrB domain occupies 1–106; that stretch reads MSFCSFFGGE…FSSSLKFVPK (106 aa). Residues cysteine 23, cysteine 26, cysteine 71, and cysteine 74 each coordinate Zn(2+). Selenocysteine 95 (nucleophile) is an active-site residue. Selenocysteine 95 is a non-standard amino acid (selenocysteine).

This sequence belongs to the MsrB Met sulfoxide reductase family. It depends on Zn(2+) as a cofactor. Truncated MSRB1/SEPX1 proteins produced by failed UGA/Sec decoding are ubiquitinated by some Cul2-RING E3 ubiquitin-protein ligase complexes (containing either PRAME, PRAMF6, PRAMF9 or FEM1C as substrate-recognition component).

It is found in the cytoplasm. It localises to the nucleus. The protein resides in the cytoskeleton. It carries out the reaction L-methionyl-[protein] + [thioredoxin]-disulfide + H2O = L-methionyl-(R)-S-oxide-[protein] + [thioredoxin]-dithiol. The enzyme catalyses [thioredoxin]-disulfide + L-methionine + H2O = L-methionine (R)-S-oxide + [thioredoxin]-dithiol. In terms of biological role, methionine-sulfoxide reductase that specifically reduces methionine (R)-sulfoxide back to methionine. While in many cases, methionine oxidation is the result of random oxidation following oxidative stress, methionine oxidation is also a post-translational modification that takes place on specific residue. Acts as a regulator of actin assembly by reducing methionine (R)-sulfoxide mediated by MICALs (MICAL1, MICAL2 or MICAL3) on actin, thereby promoting filament repolymerization. Plays a role in innate immunity by reducing oxidized actin, leading to actin repolymerization in macrophages. This Homo sapiens (Human) protein is Methionine-R-sulfoxide reductase B1 (MSRB1).